Reading from the N-terminus, the 765-residue chain is Spastin (765 aa).

The disordered stretch occupies residues Met-1 to Thr-94. Over Met-1–Pro-107 the chain is Cytoplasmic. A required for localization to punctate cytoplasmic foci region spans residues Met-1–Asn-195. A compositionally biased stretch (low complexity) spans Ser-8–Ser-19. Polar residues predominate over residues Ser-48–Ala-58. Residues Thr-59–Ser-72 are compositionally biased toward low complexity. Positions Ile-108–Tyr-128 form an intramembrane region, helical. Topologically, residues Leu-129–Ile-765 are cytoplasmic. The segment at Ala-193–Ile-765 is sufficient for interaction with microtubules and microtubule severing. Residues His-218–Leu-293 enclose the MIT domain. A disordered region spans residues Gln-329 to Met-462. Residues Ser-355–Ser-364 are compositionally biased toward low complexity. Polar residues-rich tracts occupy residues Asn-389 to Val-407 and Gln-428 to Ile-444. The segment at Asn-446–Met-462 is required for interaction with microtubules. Gly-530 to Thr-537 contributes to the ATP binding site.

It belongs to the AAA ATPase family. Spastin subfamily. As to quaternary structure, homohexamer. The homohexamer is stabilized by ATP-binding. The homohexamer may adopt a ring conformation through which microtubules pass prior to being severed. Interacts with microtubules. Interacts with atl; may be involved in microtubule dynamics.

It is found in the membrane. The protein resides in the cytoplasm. It localises to the cytoskeleton. Its subcellular location is the microtubule organizing center. The protein localises to the centrosome. It is found in the chromosome. The protein resides in the lipid droplet. It catalyses the reaction n ATP + n H2O + a microtubule = n ADP + n phosphate + (n+1) alpha/beta tubulin heterodimers.. In terms of biological role, ATP-dependent microtubule severing protein. Stimulates microtubule minus-end depolymerization and poleward microtubule flux in the mitotic spindle. Regulates microtubule stability in the neuromuscular junction synapse. Involved in lipid metabolism by regulating the size and distribution of lipid droplets. Involved in axon regeneration by regulating microtubule severing. The sequence is that of Spastin from Drosophila mojavensis (Fruit fly).